Here is a 228-residue protein sequence, read N- to C-terminus: L-ribulose-5-phosphate 4-epimerase UlaF (228 aa).

Substrate contacts are provided by residues 26-27 (GN), 43-44 (SG), and 72-73 (SS). Zn(2+)-binding residues include aspartate 74, histidine 93, and histidine 95. The active-site Proton donor/acceptor is the aspartate 118. Residue histidine 167 participates in Zn(2+) binding. Residue tyrosine 225 is the Proton donor/acceptor of the active site.

The protein belongs to the aldolase class II family. AraD/FucA subfamily. Zn(2+) serves as cofactor.

The enzyme catalyses L-ribulose 5-phosphate = D-xylulose 5-phosphate. The protein operates within cofactor degradation; L-ascorbate degradation; D-xylulose 5-phosphate from L-ascorbate: step 4/4. Its function is as follows. Catalyzes the isomerization of L-ribulose 5-phosphate to D-xylulose 5-phosphate. Is involved in the anaerobic L-ascorbate utilization. This chain is L-ribulose-5-phosphate 4-epimerase UlaF, found in Escherichia coli O6:K15:H31 (strain 536 / UPEC).